A 165-amino-acid polypeptide reads, in one-letter code: Small ribosomal subunit protein bS16 (165 aa).

It belongs to the bacterial ribosomal protein bS16 family.

This is Small ribosomal subunit protein bS16 from Azobacteroides pseudotrichonymphae genomovar. CFP2.